The chain runs to 673 residues: Polyunsaturated fatty acid 5-lipoxygenase (673 aa).

The region spanning 2–117 is the PLAT domain; the sequence is PSYTVTVATG…EIVLRDGRAK (116 aa). Residues G17, T18, D19, N44, D45, E47, D79, and D80 each contribute to the Ca(2+) site. The Lipoxygenase domain maps to 118 to 673; sequence LARDDQIHIL…PDRIPNSVAI (556 aa). S271 is subject to Phosphoserine. Residues H367 and H372 each contribute to the Fe cation site. The residue at position 523 (S523) is a Phosphoserine. Fe cation is bound by residues H550, N554, and I673.

This sequence belongs to the lipoxygenase family. Homodimer. Interacts with ALOX5AP and LTC4S. Interacts with COTL1, the interaction is required for stability and efficient catalytic activity. Interacts with PIK3R1; this interaction bridges ALOX5 with CD40 after CD40 ligation in B cells and leads to the production of reactive oxygen species (ROS). Interacts (via PLAT domain) with DICER1 (via Dicer dsRNA-binding fold domain); this interaction enhances arachidonate 5-lipoxygenase activity and modifies the miRNA precursor processing activity of DICER1. The cofactor is Fe cation. In terms of processing, serine phosphorylation by MAPKAPK2 is stimulated by arachidonic acid. Phosphorylation on Ser-523 by PKA has an inhibitory effect. Phosphorylation on Ser-271 prevents export from the nucleus. Phosphorylation at Ser-523 is stimulated by 8-bromo-3',5'-cyclic AMP or prostaglandin E2.

The protein resides in the cytoplasm. Its subcellular location is the nucleus matrix. The protein localises to the nucleus membrane. It is found in the perinuclear region. It localises to the cytosol. The protein resides in the nucleus envelope. Its subcellular location is the nucleus intermembrane space. The enzyme catalyses (5Z,8Z,11Z,14Z)-eicosatetraenoate + O2 = leukotriene A4 + H2O. It carries out the reaction 18-HEPE + O2 = (5S)-hydroperoxy-18-hydroxy-(7E,9E,11Z,14Z,16E)-eicosapentaenoate. The catalysed reaction is (18R)-hydroxy-(5Z,8Z,11Z,14Z,16E)-eicosapentaenoate + O2 = (5S)-hydroperoxy-(18R)-hydroxy-(6E,8Z,11Z,14Z,16E)-eicosapentaenoate. It catalyses the reaction (18S)-hydroxy-(5Z,8Z,11Z,14Z,16E)-eicosapentaenoate + O2 = (5S)-hydroperoxy-(18S)-hydroxy-(6E,8Z,11Z,14Z,16E)-eicosapentaenoate. The enzyme catalyses (5S)-hydroperoxy-(18S)-hydroxy-(6E,8Z,11Z,14Z,16E)-eicosapentaenoate = (5S,6S)-epoxy-(18S)-hydroxy-(7E,9E,11Z,14Z,16E)-eicosapentaenoate + H2O. It carries out the reaction (5S)-hydroperoxy-(18R)-hydroxy-(6E,8Z,11Z,14Z,16E)-eicosapentaenoate = (5S,6S)-epoxy-(18R)-hydroxy-(7E,9E,11Z,14Z,16E)-eicosapentaenoate + H2O. The catalysed reaction is (5S)-hydroperoxy-18-hydroxy-(7E,9E,11Z,14Z,16E)-eicosapentaenoate = (5S,6S)-epoxy-18-hydroxy-(7E,9E,11Z,14Z,16E)-eicosapentaenoate + H2O. It catalyses the reaction (5Z,8Z,11Z,14Z)-eicosatetraenoate + O2 = (5S)-hydroperoxy-(6E,8Z,11Z,14Z)-eicosatetraenoate. The enzyme catalyses (15S)-hydroxy-(5Z,8Z,11Z,13E)-eicosatetraenoate + O2 = (5S)-hydroperoxy-(15S)-hydroxy-(6E,8Z,11Z,13E)-eicosatetraenoate. It carries out the reaction (5S)-hydroperoxy-(6E,8Z,11Z,14Z)-eicosatetraenoate = leukotriene A4 + H2O. The catalysed reaction is (5Z,8Z,11Z,14Z)-eicosatetraenoate + O2 = (8S)-hydroperoxy-(5Z,9E,11Z,14Z)-eicosatetraenoate. It catalyses the reaction (5Z,8Z,11Z,14Z)-eicosatetraenoate + O2 = (12S)-hydroperoxy-(5Z,8Z,10E,14Z)-eicosatetraenoate. The enzyme catalyses (5Z,8Z)-eicosadienoate + O2 = (5S)-hydroperoxy-(6E,8Z)-eicosadienoate. It carries out the reaction (12S)-hydroxy-(5Z,8Z,10E,14Z)-eicosatetraenoate + O2 = (5S)-hydroperoxy-(12S)-hydroxy-(6E,8Z,10E,14Z)-eicosatetraenoate. The catalysed reaction is (5Z,8Z,11Z,14Z,17Z)-eicosapentaenoate + O2 = 5-hydroperoxy-(6E,8Z,11Z,14Z,17Z)-eicosapentaenoate. It catalyses the reaction (4Z,7Z,10Z,13Z,16Z,19Z)-docosahexaenoate + O2 = (14S)-hydroperoxy-(4Z,7Z,10Z,12E,16Z,19Z)-docosahexaenoate. The enzyme catalyses (4Z,7Z,10Z,13Z,16Z,19Z)-docosahexaenoate + O2 = (7S)-hydroperoxy-(4Z,8E,10Z,13Z,16Z,19Z)-docosahexaenoate. It carries out the reaction (4Z,7Z,10Z,13Z,16Z,19Z)-docosahexaenoate + O2 = (17S)-hydroperoxy-(4Z,7Z,10Z,13Z,15E,19Z)-docosahexaenoate. It participates in lipid metabolism; leukotriene A4 biosynthesis. In terms of biological role, catalyzes the oxygenation of arachidonate to 5-hydroperoxyeicosatetraenoate (5-HPETE) followed by the dehydration to 5,6- epoxyeicosatetraenoate (Leukotriene A4/LTA4), the first two steps in the biosynthesis of leukotrienes, which are potent mediators of inflammation. Also catalyzes the oxygenation of arachidonate into 8-hydroperoxyicosatetraenoate (8-HPETE) and 12-hydroperoxyicosatetraenoate (12-HPETE). Displays lipoxin synthase activity being able to convert (15S)-HETE into a conjugate tetraene. Although arachidonate is the preferred substrate, this enzyme can also metabolize oxidized fatty acids derived from arachidonate such as (15S)-HETE, eicosapentaenoate (EPA) such as (18R)- and (18S)-HEPE or docosahexaenoate (DHA) which lead to the formation of specialized pro-resolving mediators (SPM) lipoxin and resolvins E and D respectively, therefore it participates in anti-inflammatory responses. Oxidation of DHA directly inhibits endothelial cell proliferation and sprouting angiogenesis via peroxisome proliferator-activated receptor gamma (PPARgamma). It does not catalyze the oxygenation of linoleic acid and does not convert (5S)-HETE to lipoxin isomers. In addition to inflammatory processes, it participates in dendritic cell migration, wound healing through an antioxidant mechanism based on heme oxygenase-1 (HO-1) regulation expression, monocyte adhesion to the endothelium via ITGAM expression on monocytes. Moreover, it helps establish an adaptive humoral immunity by regulating primary resting B cells and follicular helper T cells and participates in the CD40-induced production of reactive oxygen species (ROS) after CD40 ligation in B cells through interaction with PIK3R1 that bridges ALOX5 with CD40. May also play a role in glucose homeostasis, regulation of insulin secretion and palmitic acid-induced insulin resistance via AMPK. Can regulate bone mineralization and fat cell differentiation increases in induced pluripotent stem cells. The protein is Polyunsaturated fatty acid 5-lipoxygenase of Mesocricetus auratus (Golden hamster).